A 579-amino-acid polypeptide reads, in one-letter code: GPI alpha-1,2-mannosyltransferase 4 (579 aa).

The next 8 helical transmembrane spans lie at 131–151 (LLLT…APPM), 156–173 (WNAL…VFYT), 180–200 (IEGL…TWGP), 216–236 (LGGI…FAVV), 258–278 (ALVL…TDSW), 369–389 (YLLL…HQEA), 391–411 (FLIP…QPVP), and 416–436 (VVLF…GGLV).

The protein belongs to the glycosyltransferase 22 family. PIGZ subfamily. Widely expressed at low level, with highest level in brain and colon.

It is found in the endoplasmic reticulum membrane. It functions in the pathway glycolipid biosynthesis; glycosylphosphatidylinositol-anchor biosynthesis. Its function is as follows. Alpha-1,2-mannosyltransferase that catalyzes the transfer of the fourth mannose, via an alpha-1,2 bond, from a dolichol-phosphate-mannose (Dol-P-Man) to an alpha-D-Man-(1-&gt;2)-alpha-D-Man-(1-&gt;6)-2-PEtn-alpha-D-Man-(1-&gt;4)-alpha-D-GlcN-(1-&gt;6)-(1-radyl,2-acyl-sn-glycero-3-phospho)-2-acyl-inositol (also termed H6) intermediate and participates in the twelfth step of the glycosylphosphatidylinositol-anchor biosynthesis. The presence of a fourth mannose in GPI is facultative, suggesting that it only exists in some tissues. This chain is GPI alpha-1,2-mannosyltransferase 4, found in Homo sapiens (Human).